Reading from the N-terminus, the 238-residue chain is Probable transcriptional regulatory protein CT_457 (238 aa).

The disordered stretch occupies residues Met-1–Lys-21. Over residues Asn-9–Lys-21 the composition is skewed to basic residues.

It belongs to the TACO1 family.

It is found in the cytoplasm. The polypeptide is Probable transcriptional regulatory protein CT_457 (Chlamydia trachomatis serovar D (strain ATCC VR-885 / DSM 19411 / UW-3/Cx)).